Reading from the N-terminus, the 396-residue chain is Pre-mRNA-splicing regulator WTAP (396 aa).

Methionine 1 carries the N-acetylmethionine modification. At serine 14 the chain carries Phosphoserine. Low complexity-rich tracts occupy residues 240–257, 278–291, and 304–316; these read QQQQ…TTAS, SNGS…SGSG, and PSSP…SSNS. Positions 240–396 are disordered; it reads QQQQSQASAP…SSVNVQGSVL (157 aa). A phosphoserine mark is found at serine 305, serine 306, and serine 341. A compositionally biased stretch (polar residues) spans 340–356; that stretch reads DSPTGSENSLTHQSNDT. Residue threonine 350 is modified to Phosphothreonine. A compositionally biased stretch (basic and acidic residues) spans 357 to 368; sequence DSSHDPQEEKAV. A compositionally biased stretch (polar residues) spans 380–396; sequence HVQNGLDSSVNVQGSVL. The residue at position 388 (serine 388) is a Phosphoserine.

It belongs to the fl(2)d family. As to quaternary structure, component of the WMM complex, a N6-methyltransferase complex composed of a catalytic subcomplex, named MAC, and of an associated subcomplex, named MACOM. The MAC subcomplex is composed of METTL3 and METTL14. The MACOM subcomplex is composed of WTAP, ZC3H13, CBLL1/HAKAI, VIRMA, and, in some cases of RBM15 (RBM15 or RBM15B). Interacts with WT1. Also a component of a MACOM-like complex, named WTAP complex, composed of WTAP, ZC3H13, CBLL1, VIRMA, RBM15, BCLAF1 and THRAP3. In terms of tissue distribution, ubiquitously expressed.

The protein localises to the nucleus speckle. It is found in the nucleus. The protein resides in the nucleoplasm. Its subcellular location is the cytoplasm. In terms of biological role, associated component of the WMM complex, a complex that mediates N6-methyladenosine (m6A) methylation of RNAs, a modification that plays a role in the efficiency of mRNA splicing and RNA processing. Required for accumulation of METTL3 and METTL14 to nuclear speckle. Acts as a mRNA splicing regulator. Regulates G2/M cell-cycle transition by binding to the 3' UTR of CCNA2, which enhances its stability. Impairs WT1 DNA-binding ability and inhibits expression of WT1 target genes. The chain is Pre-mRNA-splicing regulator WTAP from Homo sapiens (Human).